The sequence spans 968 residues: RNA polymerase-associated protein RapA (968 aa).

The 171-residue stretch at 164-334 (DVGRRHAPRV…FARLRLLDPN (171 aa)) folds into the Helicase ATP-binding domain. 177 to 184 (DEVGLGKT) is an ATP binding site. A DEAH box motif is present at residues 280-283 (DEAH). Residues 490 to 662 (RVEWLMGYLT…YLASPDQTEG (173 aa)) enclose the Helicase C-terminal domain.

This sequence belongs to the SNF2/RAD54 helicase family. RapA subfamily. As to quaternary structure, interacts with the RNAP. Has a higher affinity for the core RNAP than for the holoenzyme. Its ATPase activity is stimulated by binding to RNAP.

Transcription regulator that activates transcription by stimulating RNA polymerase (RNAP) recycling in case of stress conditions such as supercoiled DNA or high salt concentrations. Probably acts by releasing the RNAP, when it is trapped or immobilized on tightly supercoiled DNA. Does not activate transcription on linear DNA. Probably not involved in DNA repair. This chain is RNA polymerase-associated protein RapA, found in Shigella boydii serotype 4 (strain Sb227).